Reading from the N-terminus, the 514-residue chain is 23S rRNA (uracil(1939)-C(5))-methyltransferase RlmD (514 aa).

Cys70, Cys76, Cys79, and Cys158 together coordinate [4Fe-4S] cluster. S-adenosyl-L-methionine-binding residues include Gln272, Phe301, Asn306, Glu322, Asn350, and Asp371. Cys398 serves as the catalytic Nucleophile.

The protein belongs to the class I-like SAM-binding methyltransferase superfamily. RNA M5U methyltransferase family. RlmD subfamily.

The catalysed reaction is uridine(1939) in 23S rRNA + S-adenosyl-L-methionine = 5-methyluridine(1939) in 23S rRNA + S-adenosyl-L-homocysteine + H(+). Functionally, catalyzes the formation of 5-methyl-uridine at position 1939 (m5U1939) in 23S rRNA. The protein is 23S rRNA (uracil(1939)-C(5))-methyltransferase RlmD of Chromobacterium violaceum (strain ATCC 12472 / DSM 30191 / JCM 1249 / CCUG 213 / NBRC 12614 / NCIMB 9131 / NCTC 9757 / MK).